Consider the following 192-residue polypeptide: NADH dehydrogenase [ubiquinone] iron-sulfur protein 3 (192 aa).

This sequence belongs to the complex I 30 kDa subunit family. As to quaternary structure, complex I is composed of about 45 different subunits. This is a component of the iron-sulfur (IP) fragment of the enzyme.

The protein resides in the mitochondrion inner membrane. It carries out the reaction a ubiquinone + NADH + 5 H(+)(in) = a ubiquinol + NAD(+) + 4 H(+)(out). In terms of biological role, core subunit of the mitochondrial membrane respiratory chain NADH dehydrogenase (Complex I) that is believed to belong to the minimal assembly required for catalysis. Complex I functions in the transfer of electrons from NADH to the respiratory chain. The immediate electron acceptor for the enzyme is believed to be ubiquinone. This chain is NADH dehydrogenase [ubiquinone] iron-sulfur protein 3 (NAD9), found in Beta trigyna (Caucasian wild beet).